Here is a 548-residue protein sequence, read N- to C-terminus: Chaperonin GroEL (548 aa).

Residues Thr-29 to Pro-32, Lys-50, Asp-86 to Thr-90, Gly-416, and Asp-497 contribute to the ATP site.

Belongs to the chaperonin (HSP60) family. In terms of assembly, forms a cylinder of 14 subunits composed of two heptameric rings stacked back-to-back. Interacts with the co-chaperonin GroES.

The protein resides in the cytoplasm. It carries out the reaction ATP + H2O + a folded polypeptide = ADP + phosphate + an unfolded polypeptide.. Together with its co-chaperonin GroES, plays an essential role in assisting protein folding. The GroEL-GroES system forms a nano-cage that allows encapsulation of the non-native substrate proteins and provides a physical environment optimized to promote and accelerate protein folding. The polypeptide is Chaperonin GroEL (Neorickettsia risticii (Ehrlichia risticii)).